The primary structure comprises 93 residues: Large ribosomal subunit protein bL27 (93 aa).

The interval 1–22 (MAHKKAGGSSRNGRDSEGRRLG) is disordered.

It belongs to the bacterial ribosomal protein bL27 family.

The protein is Large ribosomal subunit protein bL27 of Methylobacterium sp. (strain 4-46).